The following is a 121-amino-acid chain: Flagellar protein FliT (121 aa).

The tract at residues 1 to 50 (MNNAPHLYFAWQQLVEKSQLMLRLATEEQWDELIASEMAYVNAVQEIAHL) is required for homodimerization. Positions 60 to 98 (MQEQLRPMLHLILDNESKVKQLLQIRMDELAKLVGQSSV) are fliD binding.

The protein belongs to the FliT family. In terms of assembly, homodimer. Interacts with FliD and FlhC.

It is found in the cytoplasm. Its subcellular location is the cytosol. Dual-function protein that regulates the transcription of class 2 flagellar operons and that also acts as an export chaperone for the filament-capping protein FliD. As a transcriptional regulator, acts as an anti-FlhDC factor; it directly binds FlhC, thus inhibiting the binding of the FlhC/FlhD complex to class 2 promoters, resulting in decreased expression of class 2 flagellar operons. As a chaperone, effects FliD transition to the membrane by preventing its premature polymerization, and by directing it to the export apparatus. In Shigella flexneri serotype 5b (strain 8401), this protein is Flagellar protein FliT.